The primary structure comprises 81 residues: Photosystem I iron-sulfur center (81 aa).

4Fe-4S ferredoxin-type domains lie at 2–31 (SHSV…MVPW) and 39–68 (IAAS…IRVY). 8 residues coordinate [4Fe-4S] cluster: Cys11, Cys14, Cys17, Cys21, Cys48, Cys51, Cys54, and Cys58.

As to quaternary structure, the cyanobacterial PSI reaction center is composed of one copy each of PsaA,B,C,D,E,F,I,J,K,L,M and X, and forms trimeric complexes. [4Fe-4S] cluster is required as a cofactor.

Its subcellular location is the cellular thylakoid membrane. The enzyme catalyses reduced [plastocyanin] + hnu + oxidized [2Fe-2S]-[ferredoxin] = oxidized [plastocyanin] + reduced [2Fe-2S]-[ferredoxin]. In terms of biological role, apoprotein for the two 4Fe-4S centers FA and FB of photosystem I (PSI); essential for photochemical activity. FB is the terminal electron acceptor of PSI, donating electrons to ferredoxin. The C-terminus interacts with PsaA/B/D and helps assemble the protein into the PSI complex. Required for binding of PsaD and PsaE to PSI. PSI is a plastocyanin/cytochrome c6-ferredoxin oxidoreductase, converting photonic excitation into a charge separation, which transfers an electron from the donor P700 chlorophyll pair to the spectroscopically characterized acceptors A0, A1, FX, FA and FB in turn. The sequence is that of Photosystem I iron-sulfur center from Synechococcus elongatus (strain ATCC 33912 / PCC 7942 / FACHB-805) (Anacystis nidulans R2).